The chain runs to 507 residues: Phosphoprotein (507 aa).

The interval 1-48 (MAEEQARHVKNGLECIRALKAEPIGSLAIGEAMAAWSEISDNPGQEQA) is interaction with N0. Disordered regions lie at residues 40 to 98 (SDNP…FPSR), 134 to 174 (GLDG…APIS), 201 to 231 (NNFP…IKKG), and 251 to 305 (ATQC…KGGD). A Phosphoserine modification is found at S86. The segment covering 134 to 145 (GLDGDSTLSGGD) has biased composition (low complexity). Positions 146–160 (NESENSDVDIGEPDT) are enriched in acidic residues. The residue at position 151 (S151) is a Phosphoserine. The span at 260 to 270 (SEPSGPGAPAG) shows a compositional bias: low complexity. The span at 279-300 (AALTQEWTPESGTTISPRSQNK) shows a compositional bias: polar residues. The tract at residues 304-376 (GDYYDDELFS…LSSIMIAIPG (73 aa)) is multimerization. Interaction with the L polymerase regions lie at residues 361–377 (STLE…IPGL) and 396–410 (PIIG…AEVL). Residues 457-507 (GPASRSVIRSIIKSSRIEEDRKRYLMTLLDDIKGANDLAKFHQMLMKIIMK) are x domain (XD). The segment at 459–507 (ASRSVIRSIIKSSRIEEDRKRYLMTLLDDIKGANDLAKFHQMLMKIIMK) is interaction with the nucleocapsid (N-RNA).

The protein belongs to the morbillivirus P protein family. In terms of assembly, homotetramer. Interacts (via multimerization domain and XD domain) with polymerase L; this interaction forms the polymerase L-P complex. Interacts (via N-terminus) with N0 (via Ncore); this interaction allows P to chaperon N0 to avoid N polymerization and non-specific RNA binding before encapsidation. Interacts (via C-terminus) with N-RNA template (via Ntail); this interaction maintains the P/L complex anchored to the nucleocapsid template during the sequential transcription. Interacts (via C-terminus) with protein C this interaction allows C to associate with the ribonucleocapsid. Phosphorylation on serines by host CK2 is necessary for the formation of viral factories.

In terms of biological role, essential cofactor of the RNA polymerase L that plays a central role in the transcription and replication by forming the polymerase complex with RNA polymerase L and recruiting L to the genomic N-RNA template for RNA synthesis. Also plays a central role in the encapsidation of nascent RNA chains by forming the encapsidation complex with the nucleocapsid protein N (N-P complex). Acts as a chaperone for newly synthesized free N protein, so-called N0, allowing encapsidation of nascent RNA chains during replication. The nucleoprotein protein N prevents excessive phosphorylation of P, which leads to down-regulation of viral transcription/ replication. Participates, together with N, in the formation of viral factories (viroplasms), which are large inclusions in the host cytoplasm where replication takes place. This Homo sapiens (Human) protein is Phosphoprotein (P/V).